The following is a 217-amino-acid chain: Probable transaldolase (217 aa).

The active-site Schiff-base intermediate with substrate is the Lys83.

It belongs to the transaldolase family. Type 3B subfamily.

Its subcellular location is the cytoplasm. The enzyme catalyses D-sedoheptulose 7-phosphate + D-glyceraldehyde 3-phosphate = D-erythrose 4-phosphate + beta-D-fructose 6-phosphate. The protein operates within carbohydrate degradation; pentose phosphate pathway; D-glyceraldehyde 3-phosphate and beta-D-fructose 6-phosphate from D-ribose 5-phosphate and D-xylulose 5-phosphate (non-oxidative stage): step 2/3. Its function is as follows. Transaldolase is important for the balance of metabolites in the pentose-phosphate pathway. The polypeptide is Probable transaldolase (Paracoccus denitrificans (strain Pd 1222)).